A 353-amino-acid chain; its full sequence is Photosystem II D2 protein (353 aa).

Thr-2 bears the N-acetylthreonine mark. Thr-2 is modified (phosphothreonine). Residues 41–61 (CAYFALGGWFTGTTFVTSWYT) form a helical membrane-spanning segment. Position 118 (His-118) interacts with chlorophyll a. A helical membrane pass occupies residues 125–141 (GFMLRQFELARSVQLRP). Residues Gln-130 and Asn-143 each contribute to the pheophytin a site. A helical membrane pass occupies residues 153-166 (VFVSVFLIYPLGQS). A chlorophyll a-binding site is contributed by His-198. Residues 208–228 (AALLCAIHGATVENTLFEDGD) traverse the membrane as a helical segment. Residues His-215 and Phe-262 each contribute to the a plastoquinone site. His-215 is a binding site for Fe cation. Residue His-269 participates in Fe cation binding. The helical transmembrane segment at 279 to 295 (GLWMSALGVVGLALNLR) threads the bilayer.

This sequence belongs to the reaction center PufL/M/PsbA/D family. As to quaternary structure, PSII is composed of 1 copy each of membrane proteins PsbA, PsbB, PsbC, PsbD, PsbE, PsbF, PsbH, PsbI, PsbJ, PsbK, PsbL, PsbM, PsbT, PsbX, PsbY, PsbZ, Psb30/Ycf12, at least 3 peripheral proteins of the oxygen-evolving complex and a large number of cofactors. It forms dimeric complexes. The D1/D2 heterodimer binds P680, chlorophylls that are the primary electron donor of PSII, and subsequent electron acceptors. It shares a non-heme iron and each subunit binds pheophytin, quinone, additional chlorophylls, carotenoids and lipids. There is also a Cl(-1) ion associated with D1 and D2, which is required for oxygen evolution. The PSII complex binds additional chlorophylls, carotenoids and specific lipids. is required as a cofactor.

It localises to the plastid. It is found in the chloroplast thylakoid membrane. It carries out the reaction 2 a plastoquinone + 4 hnu + 2 H2O = 2 a plastoquinol + O2. In terms of biological role, photosystem II (PSII) is a light-driven water:plastoquinone oxidoreductase that uses light energy to abstract electrons from H(2)O, generating O(2) and a proton gradient subsequently used for ATP formation. It consists of a core antenna complex that captures photons, and an electron transfer chain that converts photonic excitation into a charge separation. The D1/D2 (PsbA/PsbD) reaction center heterodimer binds P680, the primary electron donor of PSII as well as several subsequent electron acceptors. D2 is needed for assembly of a stable PSII complex. This Lemna minor (Common duckweed) protein is Photosystem II D2 protein.